We begin with the raw amino-acid sequence, 1443 residues long: ARF guanine-nucleotide exchange factor GNL1 (1443 aa).

An SEC7 domain is found at 554–743 (FVRKVKHIKK…SEIYHSIRHS (190 aa)). Glu658 is an active-site residue. Disordered stretches follow at residues 917–949 (DDPE…AMPR) and 1424–1443 (DQFQ…GNEV). Polar residues predominate over residues 939–949 (VSQSQPSAMPR). Positions 1425 to 1435 (QFQRRNAKPED) are enriched in basic and acidic residues.

In terms of assembly, homodimer.

Its subcellular location is the cytoplasm. The protein resides in the cytosol. It localises to the golgi apparatus membrane. In terms of biological role, activates the ARF proteins by exchanging bound GDP for free GTP. Plays a role in vesicular protein sorting. Acts as the major regulator of retrograde Golgi to endoplasmic reticulum trafficking but is also involved in the endocytosis process. Could function redundantly with GNOM. Regulates vesicle trafficking required for the coordinated polar localization of auxin efflux carriers which in turn determines the direction of auxin flow. Mediates the endocytosis of PIN2 from plasma membrane to endosomal compartments. Required for maintenance of endoplasmic reticulum morphology. The protein is ARF guanine-nucleotide exchange factor GNL1 (GNL1) of Arabidopsis thaliana (Mouse-ear cress).